Consider the following 289-residue polypeptide: Bis(5'-nucleosyl)-tetraphosphatase, symmetrical (289 aa).

It belongs to the Ap4A hydrolase family.

The enzyme catalyses P(1),P(4)-bis(5'-adenosyl) tetraphosphate + H2O = 2 ADP + 2 H(+). Hydrolyzes diadenosine 5',5'''-P1,P4-tetraphosphate to yield ADP. The chain is Bis(5'-nucleosyl)-tetraphosphatase, symmetrical from Yersinia pseudotuberculosis serotype O:3 (strain YPIII).